Consider the following 81-residue polypeptide: UPF0349 protein SE_0633 (81 aa).

The protein belongs to the UPF0349 family.

This chain is UPF0349 protein SE_0633, found in Staphylococcus epidermidis (strain ATCC 12228 / FDA PCI 1200).